An 888-amino-acid polypeptide reads, in one-letter code: CRISPR-associated endonuclease/helicase Cas3 (888 aa).

One can recognise an HD Cas3-type domain in the interval 20 to 231; that stretch reads KGNDIHLLIY…AGFCSLADWL (212 aa). Residues D75 and H160 each contribute to the Mg(2+) site. In terms of domain architecture, Helicase ATP-binding spans 301–504; the sequence is DALPVAPGLT…LDTYGLHTDP (204 aa). Residue 314–321 coordinates ATP; sequence APTGSGKT. Residues 452-455 carry the DEAH box motif; sequence DEVH. In terms of domain architecture, Helicase C-terminal spans 556-735; the sequence is MLERMIAAAN…AYRQWLDSIY (180 aa).

It in the N-terminal section; belongs to the CRISPR-associated nuclease Cas3-HD family. This sequence in the central section; belongs to the CRISPR-associated helicase Cas3 family. Interacts with the CasA subunit of Cascade once Cascade has recognized target DNA. Mg(2+) serves as cofactor.

In terms of biological role, CRISPR (clustered regularly interspaced short palindromic repeat), is an adaptive immune system that provides protection against mobile genetic elements (viruses, transposable elements and conjugative plasmids). CRISPR clusters contain sequences complementary to antecedent mobile elements and target invading nucleic acids. CRISPR clusters are transcribed and processed into CRISPR RNA (crRNA). Cas3 plus Cascade participate in CRISPR interference, the third stage of CRISPR immunity. Acts as an endonuclease, a 3'-5'exonuclease, and an ATP-dependent dsDNA helicase. Anneals and unwinds R-loops (in which crRNA binds the target DNA, displacing the noncomplementary strand). Unwinding requires ATP, annealing does not. Required along with the Cascade complex for resistance to bacteriophage lambda infection as well as the ability to cure CRISPR-encoding high-copy number plasmid. A Cas3-CasA fusion protein purified with the Cascade complex nicks target plasmid in the presence but not absence of Mg(2+), and degrades plasmid fully in the presence of Mg(2+) and ATP, suggesting the helicase activity is required for complete degradation. This Escherichia coli (strain K12) protein is CRISPR-associated endonuclease/helicase Cas3 (ygcB).